Here is a 418-residue protein sequence, read N- to C-terminus: RapA guanosine triphosphatase-activating protein B (418 aa).

The Rap-GAP domain occupies 142-407 (LVKVCEPEFN…EKASALINVI (266 aa)). The segment at 304–339 (NRVVGEQPSPSLTTTTTTTTTTSPTINSNSPTPSNK) is disordered. Low complexity predominate over residues 311–338 (PSPSLTTTTTTTTTTSPTINSNSPTPSN).

Functionally, mediates the deactivation of rap1 during multicellular development and is required for normal morphogenesis. Also required for the correct patterning of specific subtypes of prestalk cells. This Dictyostelium discoideum (Social amoeba) protein is RapA guanosine triphosphatase-activating protein B (rapgapB).